A 227-amino-acid polypeptide reads, in one-letter code: MDQAVELPVQRLQRASLYLCTDARRERGDLAEFADAALAGGVDLIQLRDKGSAGEKQFGPLEARQELEALEILADAARRHGALLAVNDRADIALAAGADVLHLGQDDLPLDVARGIIGRRPVIGRSTHDAAQMAVAIEERVDYFCVGPCWPTPTKPGRPAPGLDLVRATAAHSPGKPWFAIGGIDQERLPEVLAAGARRVVVVRAITAADDPKAAAEDLKAAISAAG.

4-amino-2-methyl-5-(diphosphooxymethyl)pyrimidine-binding positions include 46–50 (QLRDK) and asparagine 87. Residues aspartate 88 and aspartate 107 each coordinate Mg(2+). Position 126 (serine 126) interacts with 4-amino-2-methyl-5-(diphosphooxymethyl)pyrimidine. Residue 152-154 (TPT) participates in 2-[(2R,5Z)-2-carboxy-4-methylthiazol-5(2H)-ylidene]ethyl phosphate binding. Lysine 155 provides a ligand contact to 4-amino-2-methyl-5-(diphosphooxymethyl)pyrimidine. Position 183 (glycine 183) interacts with 2-[(2R,5Z)-2-carboxy-4-methylthiazol-5(2H)-ylidene]ethyl phosphate.

This sequence belongs to the thiamine-phosphate synthase family. Mg(2+) is required as a cofactor.

It catalyses the reaction 2-[(2R,5Z)-2-carboxy-4-methylthiazol-5(2H)-ylidene]ethyl phosphate + 4-amino-2-methyl-5-(diphosphooxymethyl)pyrimidine + 2 H(+) = thiamine phosphate + CO2 + diphosphate. It carries out the reaction 2-(2-carboxy-4-methylthiazol-5-yl)ethyl phosphate + 4-amino-2-methyl-5-(diphosphooxymethyl)pyrimidine + 2 H(+) = thiamine phosphate + CO2 + diphosphate. The enzyme catalyses 4-methyl-5-(2-phosphooxyethyl)-thiazole + 4-amino-2-methyl-5-(diphosphooxymethyl)pyrimidine + H(+) = thiamine phosphate + diphosphate. Its pathway is cofactor biosynthesis; thiamine diphosphate biosynthesis; thiamine phosphate from 4-amino-2-methyl-5-diphosphomethylpyrimidine and 4-methyl-5-(2-phosphoethyl)-thiazole: step 1/1. Condenses 4-methyl-5-(beta-hydroxyethyl)thiazole monophosphate (THZ-P) and 2-methyl-4-amino-5-hydroxymethyl pyrimidine pyrophosphate (HMP-PP) to form thiamine monophosphate (TMP). This is Thiamine-phosphate synthase from Mycolicibacterium smegmatis (strain ATCC 700084 / mc(2)155) (Mycobacterium smegmatis).